Consider the following 288-residue polypeptide: Small ribosomal subunit protein uS9m (288 aa).

Residues 269–288 (VERKKPGKKKARKMPTWVKR) are disordered.

It belongs to the universal ribosomal protein uS9 family.

The protein localises to the mitochondrion. This chain is Small ribosomal subunit protein uS9m (MRPS9), found in Candida glabrata (strain ATCC 2001 / BCRC 20586 / JCM 3761 / NBRC 0622 / NRRL Y-65 / CBS 138) (Yeast).